Reading from the N-terminus, the 866-residue chain is Dynamin-2 (866 aa).

The Dynamin-type G domain occupies 28 to 294 (HLDLPQIAVV…LTNHIRESLP (267 aa)). The segment at 38 to 45 (GGQSAGKS) is G1 motif. GDP-binding residues include Ser41, Gly43, Lys44, Ser45, Ser46, Arg59, and Gly60. Residues 64-66 (VTR) are G2 motif. Residues 136–139 (DLPG) form a G3 motif region. Residues 205 to 208 (TKLD) are G4 motif. The GDP site is built by Lys206, Asp208, and Asp211. Phosphotyrosine is present on Tyr231. Residues 235–238 (VNRS) are G5 motif. GDP-binding residues include Asn236, Arg237, and Gln239. Lys299 bears the N6-acetyllysine mark. The 107-residue stretch at 515–621 (QVIRRGWLTI…WKASFLRAGV (107 aa)) folds into the PH domain. Tyr593 bears the Phosphotyrosine mark. Lys594 carries the N6-acetyllysine modification. In terms of domain architecture, GED spans 649 to 740 (VETIRNLVDS…IIGDISTSTV (92 aa)). A disordered region spans residues 737 to 866 (TSTVSTPVPP…IRPAEPSLLD (130 aa)). Thr751 bears the Phosphothreonine mark. Residues 752-763 (WIQNTSSHSPTP) are compositionally biased toward polar residues. Position 760 is a phosphoserine; by CDK1 (Ser760). Pro residues-rich tracts occupy residues 784-794 (TPGPPLIPVPV), 802-811 (PPIPSRPGPH), and 822-851 (SAPP…PAAP).

It belongs to the TRAFAC class dynamin-like GTPase superfamily. Dynamin/Fzo/YdjA family. As to quaternary structure, oligomerizes into a helical polymer that self-assembles around the vesicle membrane, when associated to the menbrane through lipid binding. Interacts with SHANK1 and SHANK2. Interacts with SNX9. Interacts (via C-terminal proline-rich domain (PRD)) with SNX18 (via SH3 domain); this interaction regulates ATG9A and ATG16L1 trafficking from recycling endosomes to sites of autophagosome formation. Interacts with SNX33 (via SH3 domain). Interacts with MYO1E (via SH3 domain). Interacts with PSTPIP1 (via SH3 domain). Interacts with CTNND2. Interacts (via C-terminal proline-rich domain (PRD)) with BIN1 (via SH3 domain); this interaction allows the recruitment of DNM2 to the membrane tubules and inhibits self-assembly-stimulated GTPase activity on the membrane. Interacts with GABARAP, GABARAPL1 and GABARAPL2. Interacts with MAP1LC3B (the lipidate and non-lipidated LC3 form); this interaction mediates recycling endosome scission leading to autophagosome release. Interacts with ITSN1. Interacts with MYOF. Interacts (via C-terminal proline-rich domain (PRD)) with SH3BP4 (via SH3 domain); this interaction controls the GTPase activity and is prevented by EGFR-induced tyrosine phosphorylation of either DNM2 or SH3BP4. May interact with PIK3C3. May be a component of a complex composed of RAB5A (in GDP-bound form), DYN2 and PIK3C3. Interacts with SDC4; this interaction is markedly enhanced at focal ahesion site upon induction of focal adhesions and stress-fiber formation. Interacts with ACTN1. Interacts with CTTN; this interaction stimulates the intrinsic GTPase activity of DNM2 and stabilizes the association of DNM2 and actin filaments; in addition this interaction is stimulated by ligand binding to the receptor, leading to the recruitment of the DNM2-CTTN complex to the sequestered receptor-ligand complex to its internalization. Interacts with NOSTRIN (via SH3 domain); this interaction allows the recruitment of NOS3 to dynamin-positive structures. Interacts with TUBG1; this interaction may participate in centrosome cohesion. In terms of processing, phosphorylation at Ser-844 by GSK3-alpha relieves the inhibition of BIN1 and promotes endocytosis. Phosphorylation at Ser-760 by CDK1 is greatly increased upon mitotic entry. It regulates cytokinesis downstream of calcineurin, and does not affect clathrin-mediated endocytosis. Dephosphorylated by calcineurin/PP2 during cytokinesis in a Ca(2+)- and calmodulin-dependent manner. Phosphorylated on tyrosine residues by EGFR and after activation of SRC.

It is found in the cytoplasm. It localises to the cytoskeleton. Its subcellular location is the cytoplasmic vesicle. The protein resides in the clathrin-coated vesicle. The protein localises to the cell projection. It is found in the uropodium. It localises to the endosome. Its subcellular location is the microtubule organizing center. The protein resides in the centrosome. The protein localises to the centriole. It is found in the recycling endosome. It localises to the phagocytic cup. Its subcellular location is the phagosome membrane. The protein resides in the podosome. The protein localises to the cell junction. It is found in the postsynaptic density. It localises to the synapse. Its subcellular location is the synaptosome. The protein resides in the midbody. The protein localises to the membrane. It is found in the clathrin-coated pit. The catalysed reaction is GTP + H2O = GDP + phosphate + H(+). In terms of biological role, catalyzes the hydrolysis of GTP and utilizes this energy to mediate vesicle scission at plasma membrane during endocytosis and filament remodeling at many actin structures during organization of the actin cytoskeleton. Plays an important role in vesicular trafficking processes, namely clathrin-mediated endocytosis (CME), exocytic and clathrin-coated vesicle from the trans-Golgi network, and PDGF stimulated macropinocytosis. During vesicular trafficking process, associates to the membrane, through lipid binding, and self-assembles into ring-like structure through oligomerization to form a helical polymer around the vesicle membrane and leading to vesicle scission. Plays a role in organization of the actin cytoskeleton by mediating arrangement of stress fibers and actin bundles in podocytes. During organization of the actin cytoskeleton, self-assembles into ring-like structure that directly bundles actin filaments to form typical membrane tubules decorated with dynamin spiral polymers. Self-assembly increases GTPase activity and the GTP hydrolysis causes the rapid depolymerization of dynamin spiral polymers, and results in dispersion of actin bundles. Remodels, through its interaction with CTTN, bundled actin filaments in a GTPase-dependent manner and plays a role in orchestrating the global actomyosin cytoskeleton. The interaction with CTTN stabilizes the interaction of DNM2 and actin filaments and stimulates the intrinsic GTPase activity that results in actin filament-barbed ends and increases the sensitivity of filaments in bundles to the actin depolymerizing factor, CFL1. Plays a role in the autophagy process, by participating in the formation of ATG9A vesicles destined for the autophagosomes through its interaction with SNX18, by mediating recycling endosome scission leading to autophagosome release through MAP1LC3B interaction. Also regulates maturation of apoptotic cell corpse-containing phagosomes by recruiting PIK3C3 to the phagosome membrane. Also plays a role in cytokinesis. May participate in centrosome cohesion through its interaction with TUBG1. Plays a role in the regulation of neuron morphology, axon growth and formation of neuronal growth cones. Involved in membrane tubulation. This Bos taurus (Bovine) protein is Dynamin-2.